The sequence spans 84 residues: MPIIKSAIERVRTSEKAEARNASQLSQMRTAIKKFDKAKLAGADNLDDLYKAAISAIDRAHSKGLIKANKAARDKSRLSARYAK.

It belongs to the bacterial ribosomal protein bS20 family.

Functionally, binds directly to 16S ribosomal RNA. In Limosilactobacillus reuteri (strain DSM 20016) (Lactobacillus reuteri), this protein is Small ribosomal subunit protein bS20.